The primary structure comprises 444 residues: UDP-N-acetylmuramoylalanine--D-glutamate ligase (444 aa).

Position 109–115 (109–115) interacts with ATP; the sequence is GSNGKTT.

This sequence belongs to the MurCDEF family.

It is found in the cytoplasm. It carries out the reaction UDP-N-acetyl-alpha-D-muramoyl-L-alanine + D-glutamate + ATP = UDP-N-acetyl-alpha-D-muramoyl-L-alanyl-D-glutamate + ADP + phosphate + H(+). Its pathway is cell wall biogenesis; peptidoglycan biosynthesis. Functionally, cell wall formation. Catalyzes the addition of glutamate to the nucleotide precursor UDP-N-acetylmuramoyl-L-alanine (UMA). The protein is UDP-N-acetylmuramoylalanine--D-glutamate ligase of Bacteroides thetaiotaomicron (strain ATCC 29148 / DSM 2079 / JCM 5827 / CCUG 10774 / NCTC 10582 / VPI-5482 / E50).